The sequence spans 722 residues: Pentatricopeptide repeat-containing protein At4g14820 (722 aa).

PPR repeat units follow at residues 75–109 (ESIV…GGRL), 110–140 (DQFS…AFKI), 145–175 (DPFV…MSHR), 176–210 (DVVT…NVMP), 211–245 (DEMI…DVRM), 246–276 (DTHL…MSVR), 277–307 (NLFV…TEKK), 308–342 (DLVC…GIKP), 343–377 (DVVS…GLES), 378–408 (ELSI…MPRR), 409–443 (NVVS…NVEP), 444–479 (NEVT…NITP), and 480–514 (KLEH…SNVV). The tract at residues 515 to 590 (IWGSLMSACR…EKGLSRIDQN (76 aa)) is type E motif. The segment at 591–621 (GKSHEFLIGDKRHKQSNEIYAKLDEVVSKLK) is type E(+) motif. The segment at 622–722 (LAGYVPDCGS…NGLCSCRDYW (101 aa)) is type DYW motif.

Belongs to the PPR family. PCMP-H subfamily.

This chain is Pentatricopeptide repeat-containing protein At4g14820 (PCMP-H3), found in Arabidopsis thaliana (Mouse-ear cress).